Consider the following 386-residue polypeptide: Phosphoglycerate kinase (386 aa).

Residues 21 to 23 (DLN), Arg-36, 59 to 62 (HLGR), Arg-112, and Arg-145 each bind substrate. Residues Lys-196, Glu-313, and 339–342 (GGDT) contribute to the ATP site.

It belongs to the phosphoglycerate kinase family. In terms of assembly, monomer.

It is found in the cytoplasm. The catalysed reaction is (2R)-3-phosphoglycerate + ATP = (2R)-3-phospho-glyceroyl phosphate + ADP. The protein operates within carbohydrate degradation; glycolysis; pyruvate from D-glyceraldehyde 3-phosphate: step 2/5. The chain is Phosphoglycerate kinase (pgk) from Haemophilus influenzae (strain ATCC 51907 / DSM 11121 / KW20 / Rd).